The chain runs to 337 residues: MGFNEIVDFFYRLAEAGDKLREEGVWLAYGPEKLPEALEKPVNGTVAVKLGFPIYQKGGVVMDVTNVEQAGIAEDAGAVAVMVLDKLPYDVRKAGGVARMADVKVIEQVMSSITIPVMAKVRIGHYYEAMILESIGVDMIDESEVLTPVDEKHHINKWLFKVPFVNGARSLAEALRRIAEGASMIRTKGEAGTGNVAEAVRHMKLIMGDIWRLRGLSAEERLRVAREYGVPHQLVDLTARLGRLPVVNFAAGGIATPADAALMMWLGADGVFVGSGIFKSSDPSERAAAIVLATSMWDDPEAVAEAQRMVSEAKSMMGIDIRKLSPEELLQVRGAEA.

Position 63 (aspartate 63) interacts with D-ribose 5-phosphate. Lysine 120 acts as the Schiff-base intermediate with D-ribose 5-phosphate in catalysis. Residue glycine 192 participates in D-ribose 5-phosphate binding. Lysine 204 lines the D-glyceraldehyde 3-phosphate pocket. D-ribose 5-phosphate is bound by residues glycine 253 and 274-275 (GS).

The protein belongs to the PdxS/SNZ family. In terms of assembly, in the presence of PdxT, forms a dodecamer of heterodimers.

It carries out the reaction aldehydo-D-ribose 5-phosphate + D-glyceraldehyde 3-phosphate + L-glutamine = pyridoxal 5'-phosphate + L-glutamate + phosphate + 3 H2O + H(+). The protein operates within cofactor biosynthesis; pyridoxal 5'-phosphate biosynthesis. In terms of biological role, catalyzes the formation of pyridoxal 5'-phosphate from ribose 5-phosphate (RBP), glyceraldehyde 3-phosphate (G3P) and ammonia. The ammonia is provided by the PdxT subunit. Can also use ribulose 5-phosphate and dihydroxyacetone phosphate as substrates, resulting from enzyme-catalyzed isomerization of RBP and G3P, respectively. The protein is Pyridoxal 5'-phosphate synthase subunit PdxS of Aeropyrum pernix (strain ATCC 700893 / DSM 11879 / JCM 9820 / NBRC 100138 / K1).